Here is a 499-residue protein sequence, read N- to C-terminus: Glycerol kinase (499 aa).

Thr13 is a binding site for ADP. Residues Thr13, Thr14, and Ser15 each coordinate ATP. Thr13 is a sn-glycerol 3-phosphate binding site. Arg17 lines the ADP pocket. Positions 83, 84, 135, and 244 each coordinate sn-glycerol 3-phosphate. Arg83, Glu84, Tyr135, Asp244, and Gln245 together coordinate glycerol. ADP-binding residues include Thr266 and Gly309. Positions 266, 309, 313, and 410 each coordinate ATP. ADP contacts are provided by Gly410 and Asn414.

This sequence belongs to the FGGY kinase family.

The enzyme catalyses glycerol + ATP = sn-glycerol 3-phosphate + ADP + H(+). The protein operates within polyol metabolism; glycerol degradation via glycerol kinase pathway; sn-glycerol 3-phosphate from glycerol: step 1/1. Inhibited by fructose 1,6-bisphosphate (FBP). Functionally, key enzyme in the regulation of glycerol uptake and metabolism. Catalyzes the phosphorylation of glycerol to yield sn-glycerol 3-phosphate. The polypeptide is Glycerol kinase (Paraburkholderia phytofirmans (strain DSM 17436 / LMG 22146 / PsJN) (Burkholderia phytofirmans)).